The chain runs to 308 residues: MAWQQLHLQCEKDNVDLAEALLLEAGALSIALDDAGDQPLFEPLPGESPLWDEVILTGLFDATIETGTRDVIEQLSHEIAAQVQASRSWVSAVDDKDWEREWMSNYKPIECANDLWIVPNWLTPPNPEATNIIMDPGLAFGTGYHATTRLCLDWLTEQDLTDKVVIDYGCGSGILGIAALLLGARHVYAVDIDPQAVLATNQNAARNSVDNRLQAFLPEDFTAFWQQQNIAPVAVMVANILAKPLIGLAPYFVTLMAPKSRIVLAGLIESQTEQVTEAYQPYFALDPKHAFTAQEDQHWQRLSGTFTG.

S-adenosyl-L-methionine is bound by residues Thr-148, Gly-169, Asp-191, and Asn-239.

This sequence belongs to the methyltransferase superfamily. PrmA family.

The protein localises to the cytoplasm. It carries out the reaction L-lysyl-[protein] + 3 S-adenosyl-L-methionine = N(6),N(6),N(6)-trimethyl-L-lysyl-[protein] + 3 S-adenosyl-L-homocysteine + 3 H(+). Functionally, methylates ribosomal protein L11. This Psychrobacter cryohalolentis (strain ATCC BAA-1226 / DSM 17306 / VKM B-2378 / K5) protein is Ribosomal protein L11 methyltransferase.